Consider the following 405-residue polypeptide: uncharacterized protein (405 aa).

Helical transmembrane passes span valine 9–valine 29, valine 41–cysteine 61, valine 74–threonine 94, glutamine 98–phenylalanine 118, alanine 138–glycine 158, leucine 168–asparagine 190, alanine 227–histidine 247, tryptophan 252–isoleucine 272, leucine 291–leucine 311, and isoleucine 373–proline 393.

Belongs to the major facilitator superfamily. Drug:H(+) antiporter-3 (DHA3) (TC 2.A.1.21) family.

The protein localises to the cell membrane. This is an uncharacterized protein from Bacillus subtilis (strain 168).